A 100-amino-acid chain; its full sequence is RING finger protein Z (100 aa).

Residue G2 is the site of N-myristoyl glycine; by host attachment. The RING-type; atypical zinc-finger motif lies at 43–79 (CRCCWFANTNLIKCSDHYICLKCLNIMLGKSSFCDIC). The PTAP/PSAP motif motif lies at 93-96 (PSAP).

Belongs to the arenaviridae Z protein family. As to quaternary structure, interacts with protein NP; this interaction probably directs the encapsidated genome to budding sites. Interacts (via RING domain) with polymerase L; this interaction inhibits viral transcription and replication, Z partially blocks the product exit tunnel for the releasing nascent RNA product. Interacts with the glycoprotein complex; this interaction plays a role in virion budding. Interacts with host eIF4E; this interaction results in eIF4E reduced affinity for its substrate, the 5'-m7 G cap structure. Interacts (via late-budding domain) with host TSG101; this interaction is essential for budding and release of viral particles. Interacts with host RPLP0; this interaction may serve to load ribosome-like particles inside the virion. Interacts with host PML; this interaction induces PML bodies redistribution in the cytoplasm upon viral infection. In terms of processing, myristoylation is required for the role of RING finger protein Z in assembly and budding.

It is found in the virion. The protein localises to the host cytoplasm. Its subcellular location is the host perinuclear region. The protein resides in the host cell membrane. In terms of biological role, plays a crucial role in virion assembly and budding. Expressed late in the virus life cycle, it acts as an inhibitor of viral transcription and RNA synthesis by interacting with the viral polymerase L. Presumably recruits the NP encapsidated genome to cellular membranes at budding sites via direct interaction with NP. Plays critical roles in the final steps of viral release by interacting with host TSG101, a member of the vacuolar protein-sorting pathway and using other cellular host proteins involved in vesicle formation pathway. The budding of the virus progeny occurs after association of protein Z with the viral glycoprotein complex SSP-GP1-GP2 at the cell periphery, step that requires myristoylation of protein Z. Also selectively represses protein production by associating with host eIF4E. In cell-based minigenome assay, has an inhibitory effect on the ribonucleoprotein machinery (vRNP), which is responsible for the replication and transcription of the viral genome. In Homo sapiens (Human), this protein is RING finger protein Z.